The primary structure comprises 394 residues: 1-deoxy-D-xylulose 5-phosphate reductoisomerase (394 aa).

NADPH contacts are provided by T10, G11, S12, I13, N38, and N125. K126 lines the 1-deoxy-D-xylulose 5-phosphate pocket. An NADPH-binding site is contributed by E127. Residue D151 participates in Mn(2+) binding. 1-deoxy-D-xylulose 5-phosphate-binding residues include S152, E153, S182, and H205. A Mn(2+)-binding site is contributed by E153. G211 serves as a coordination point for NADPH. The 1-deoxy-D-xylulose 5-phosphate site is built by S218, N223, K224, and E227. Residue E227 coordinates Mn(2+).

It belongs to the DXR family. It depends on Mg(2+) as a cofactor. Requires Mn(2+) as cofactor.

It carries out the reaction 2-C-methyl-D-erythritol 4-phosphate + NADP(+) = 1-deoxy-D-xylulose 5-phosphate + NADPH + H(+). It participates in isoprenoid biosynthesis; isopentenyl diphosphate biosynthesis via DXP pathway; isopentenyl diphosphate from 1-deoxy-D-xylulose 5-phosphate: step 1/6. Functionally, catalyzes the NADPH-dependent rearrangement and reduction of 1-deoxy-D-xylulose-5-phosphate (DXP) to 2-C-methyl-D-erythritol 4-phosphate (MEP). In Methylococcus capsulatus (strain ATCC 33009 / NCIMB 11132 / Bath), this protein is 1-deoxy-D-xylulose 5-phosphate reductoisomerase.